The following is a 215-amino-acid chain: Redox-sensing transcriptional repressor Rex (215 aa).

Positions 18-57 (LYYRFLKNLHASGKQRVSSAELSEAVKVDPATIRRDFSYF) form a DNA-binding region, H-T-H motif. 92 to 97 (GVGNLG) serves as a coordination point for NAD(+).

This sequence belongs to the transcriptional regulatory Rex family. Homodimer.

The protein resides in the cytoplasm. In terms of biological role, modulates transcription in response to changes in cellular NADH/NAD(+) redox state. The chain is Redox-sensing transcriptional repressor Rex from Geobacillus sp. (strain WCH70).